We begin with the raw amino-acid sequence, 132 residues long: Cytochrome c-554 (132 aa).

The first 24 residues, 1–24 (MKSISMLTLAASVAFAVTAGQAVA), serve as a signal peptide directing secretion. The Cytochrome c domain maps to 26 to 126 (GDPAAGEKVF…NVWAYLSQFG (101 aa)). Cys38, Cys41, His42, and Met104 together coordinate heme c.

Post-translationally, binds 1 heme c group covalently per subunit.

It localises to the periplasm. The polypeptide is Cytochrome c-554 (Methylosinus trichosporium).